The sequence spans 193 residues: Holliday junction branch migration complex subunit RuvA (193 aa).

The interval 1–64 (MIGRIAGILL…EDAHLLYGFL (64 aa)) is domain I. Positions 65-139 (TPQERTTFRE…GKLGADLGAL (75 aa)) are domain II. Residues 139 to 143 (LAGAA) form a flexible linker region. The tract at residues 144–193 (SQSDHATDILNALVALGYSEKEGLAAIKNVPAGTGVSEGIKLALKALSKV) is domain III.

The protein belongs to the RuvA family. As to quaternary structure, homotetramer. Forms an RuvA(8)-RuvB(12)-Holliday junction (HJ) complex. HJ DNA is sandwiched between 2 RuvA tetramers; dsDNA enters through RuvA and exits via RuvB. An RuvB hexamer assembles on each DNA strand where it exits the tetramer. Each RuvB hexamer is contacted by two RuvA subunits (via domain III) on 2 adjacent RuvB subunits; this complex drives branch migration. In the full resolvosome a probable DNA-RuvA(4)-RuvB(12)-RuvC(2) complex forms which resolves the HJ.

The protein localises to the cytoplasm. Functionally, the RuvA-RuvB-RuvC complex processes Holliday junction (HJ) DNA during genetic recombination and DNA repair, while the RuvA-RuvB complex plays an important role in the rescue of blocked DNA replication forks via replication fork reversal (RFR). RuvA specifically binds to HJ cruciform DNA, conferring on it an open structure. The RuvB hexamer acts as an ATP-dependent pump, pulling dsDNA into and through the RuvAB complex. HJ branch migration allows RuvC to scan DNA until it finds its consensus sequence, where it cleaves and resolves the cruciform DNA. This is Holliday junction branch migration complex subunit RuvA from Burkholderia ambifaria (strain MC40-6).